The sequence spans 372 residues: MRSIIADSKRLVVKVGSSLVTNDGKGLDHAAIGRWAAQIAALRAQGKEVVLVSSGAIAEGMQRLGWSKRPREIDELQAAAAVGQMGLAQVYESRFTEHGIRTAQILLTHADLADRERYLNARSTLLTLLRLGVVPIINENDTVVTDEIKFGDNDTLGALVANLIEGDALIILTDQSGLFTADPRKDPNATLVGEANAGAPELEAMAGGAGSSLGRGGMLTKILAAKRAAHSGANTVIASGREADVLVRLAAGEAIGTQLIARTARMAARKQWMADHLQVRGHVVIDAGAVEKLTAGGKSLLPIGVIDVQGAFARGEVIACVGPDGREVARGLTNYSSAETKLIHRKPSGEIETVLGYMLEPELIHRDNLVLV.

Lys14 lines the ATP pocket. Residues Ser54, Asp141, and Asn153 each coordinate substrate. 173 to 174 serves as a coordination point for ATP; sequence TD. One can recognise a PUA domain in the interval 280-358; it reads RGHVVIDAGA…GEIETVLGYM (79 aa).

It belongs to the glutamate 5-kinase family.

It is found in the cytoplasm. The catalysed reaction is L-glutamate + ATP = L-glutamyl 5-phosphate + ADP. Its pathway is amino-acid biosynthesis; L-proline biosynthesis; L-glutamate 5-semialdehyde from L-glutamate: step 1/2. Functionally, catalyzes the transfer of a phosphate group to glutamate to form L-glutamate 5-phosphate. This chain is Glutamate 5-kinase, found in Burkholderia orbicola (strain AU 1054).